A 156-amino-acid chain; its full sequence is MPRKGPAPRRPLVADPVYNSPLVTQLVNKILLRGKRQLAETIVYEALEGCREKSGTDPVVTLKRAMDNVKPTLEVRSRRVGGATYQVPVEVRPARATTLGLRWLVTYARARREKTMVERLMNELLDASNGLGAAVKRREDTHKMAESNKAFAHYRW.

It belongs to the universal ribosomal protein uS7 family. In terms of assembly, part of the 30S ribosomal subunit. Contacts proteins S9 and S11.

In terms of biological role, one of the primary rRNA binding proteins, it binds directly to 16S rRNA where it nucleates assembly of the head domain of the 30S subunit. Is located at the subunit interface close to the decoding center, probably blocks exit of the E-site tRNA. The sequence is that of Small ribosomal subunit protein uS7 from Salinispora arenicola (strain CNS-205).